Here is a 399-residue protein sequence, read N- to C-terminus: Phosphoglycerate kinase (399 aa).

Residues D24 to N26, R41, H64 to R67, R123, and R160 each bind substrate. ATP is bound by residues K210, G298, E329, and G355 to S358.

The protein belongs to the phosphoglycerate kinase family. As to quaternary structure, monomer.

The protein localises to the cytoplasm. The enzyme catalyses (2R)-3-phosphoglycerate + ATP = (2R)-3-phospho-glyceroyl phosphate + ADP. It functions in the pathway carbohydrate degradation; glycolysis; pyruvate from D-glyceraldehyde 3-phosphate: step 2/5. This chain is Phosphoglycerate kinase, found in Salinispora tropica (strain ATCC BAA-916 / DSM 44818 / JCM 13857 / NBRC 105044 / CNB-440).